A 262-amino-acid chain; its full sequence is Tropinone reductase homolog At2g29290 (262 aa).

Position 13–37 (13–37) interacts with NADP(+); that stretch reads LVTGGTKGIGEAVVEELSILGARVH. S146 contributes to the substrate binding site. Y159 functions as the Proton acceptor in the catalytic mechanism.

This sequence belongs to the short-chain dehydrogenases/reductases (SDR) family. SDR65C subfamily.

The sequence is that of Tropinone reductase homolog At2g29290 from Arabidopsis thaliana (Mouse-ear cress).